The sequence spans 238 residues: 1-(5-phosphoribosyl)-5-[(5-phosphoribosylamino)methylideneamino] imidazole-4-carboxamide isomerase (238 aa).

Catalysis depends on Asp8, which acts as the Proton acceptor. Catalysis depends on Asp129, which acts as the Proton donor.

The protein belongs to the HisA/HisF family.

The protein resides in the cytoplasm. The enzyme catalyses 1-(5-phospho-beta-D-ribosyl)-5-[(5-phospho-beta-D-ribosylamino)methylideneamino]imidazole-4-carboxamide = 5-[(5-phospho-1-deoxy-D-ribulos-1-ylimino)methylamino]-1-(5-phospho-beta-D-ribosyl)imidazole-4-carboxamide. The protein operates within amino-acid biosynthesis; L-histidine biosynthesis; L-histidine from 5-phospho-alpha-D-ribose 1-diphosphate: step 4/9. This chain is 1-(5-phosphoribosyl)-5-[(5-phosphoribosylamino)methylideneamino] imidazole-4-carboxamide isomerase, found in Clostridium novyi (strain NT).